The following is a 334-amino-acid chain: Glyceraldehyde-3-phosphate dehydrogenase (334 aa).

Residues 11-12 (RI), aspartate 33, and serine 119 contribute to the NAD(+) site. Residues 149–151 (SCT) and threonine 180 contribute to the D-glyceraldehyde 3-phosphate site. Cysteine 150 functions as the Nucleophile in the catalytic mechanism. Asparagine 181 is a binding site for NAD(+). Residues arginine 197, 210 to 211 (TG), and arginine 233 contribute to the D-glyceraldehyde 3-phosphate site. Residue asparagine 314 coordinates NAD(+).

Belongs to the glyceraldehyde-3-phosphate dehydrogenase family. In terms of assembly, homotetramer.

It localises to the cytoplasm. It carries out the reaction D-glyceraldehyde 3-phosphate + phosphate + NAD(+) = (2R)-3-phospho-glyceroyl phosphate + NADH + H(+). It functions in the pathway carbohydrate degradation; glycolysis; pyruvate from D-glyceraldehyde 3-phosphate: step 1/5. Its function is as follows. Catalyzes the oxidative phosphorylation of glyceraldehyde 3-phosphate (G3P) to 1,3-bisphosphoglycerate (BPG) using the cofactor NAD. The first reaction step involves the formation of a hemiacetal intermediate between G3P and a cysteine residue, and this hemiacetal intermediate is then oxidized to a thioester, with concomitant reduction of NAD to NADH. The reduced NADH is then exchanged with the second NAD, and the thioester is attacked by a nucleophilic inorganic phosphate to produce BPG. The protein is Glyceraldehyde-3-phosphate dehydrogenase (gap) of Clostridium acetobutylicum (strain ATCC 824 / DSM 792 / JCM 1419 / IAM 19013 / LMG 5710 / NBRC 13948 / NRRL B-527 / VKM B-1787 / 2291 / W).